A 180-amino-acid polypeptide reads, in one-letter code: Cytidylate kinase (180 aa).

Position 7-15 (7-15) interacts with ATP; that stretch reads GLPGSGTST.

This sequence belongs to the cytidylate kinase family. Type 2 subfamily.

It localises to the cytoplasm. It catalyses the reaction CMP + ATP = CDP + ADP. The enzyme catalyses dCMP + ATP = dCDP + ADP. This chain is Cytidylate kinase (cmk), found in Methanosarcina mazei (strain ATCC BAA-159 / DSM 3647 / Goe1 / Go1 / JCM 11833 / OCM 88) (Methanosarcina frisia).